Here is a 572-residue protein sequence, read N- to C-terminus: Phosphoglucomutase-1 (572 aa).

Residues T23, R27, 120 to 121 (SH), and K133 each bind substrate. Catalysis depends on S120, which acts as the Phosphoserine intermediate. S120 provides a ligand contact to Mg(2+). Mg(2+)-binding residues include D288, D290, and D292. Substrate contacts are provided by residues 292–293 (DR), T356, 375–377 (EES), K388, and R524.

The protein belongs to the phosphohexose mutase family. Mg(2+) is required as a cofactor.

It localises to the cytoplasm. It carries out the reaction alpha-D-glucose 1-phosphate = alpha-D-glucose 6-phosphate. Its function is as follows. This enzyme participates in both the breakdown and synthesis of glucose. This Dictyostelium discoideum (Social amoeba) protein is Phosphoglucomutase-1 (pgmA).